A 758-amino-acid chain; its full sequence is 5-methyltetrahydropteroyltriglutamate--homocysteine methyltransferase (758 aa).

Residues 16–19 (RELK) and K112 each bind 5-methyltetrahydropteroyltri-L-glutamate. L-homocysteine-binding positions include 433-435 (IGS) and E486. L-methionine contacts are provided by residues 433-435 (IGS) and E486. Residues 517-518 (RC) and W563 each bind 5-methyltetrahydropteroyltri-L-glutamate. Position 601 (D601) interacts with L-homocysteine. D601 contributes to the L-methionine binding site. Position 607 (E607) interacts with 5-methyltetrahydropteroyltri-L-glutamate. Positions 643, 645, and 667 each coordinate Zn(2+). H696 acts as the Proton donor in catalysis. C728 contributes to the Zn(2+) binding site.

This sequence belongs to the vitamin-B12 independent methionine synthase family. It depends on Zn(2+) as a cofactor.

It catalyses the reaction 5-methyltetrahydropteroyltri-L-glutamate + L-homocysteine = tetrahydropteroyltri-L-glutamate + L-methionine. The protein operates within amino-acid biosynthesis; L-methionine biosynthesis via de novo pathway; L-methionine from L-homocysteine (MetE route): step 1/1. In terms of biological role, catalyzes the transfer of a methyl group from 5-methyltetrahydrofolate to homocysteine resulting in methionine formation. This is 5-methyltetrahydropteroyltriglutamate--homocysteine methyltransferase from Neisseria meningitidis serogroup C (strain 053442).